Consider the following 470-residue polypeptide: 6-phospho-beta-galactosidase (470 aa).

D-galactose 6-phosphate-binding residues include Q19, H116, N159, E160, and N297. The Proton donor role is filled by E160. The Nucleophile role is filled by E375. Residues S430, W431, K437, and Y439 each contribute to the D-galactose 6-phosphate site.

This sequence belongs to the glycosyl hydrolase 1 family.

It carries out the reaction a 6-phospho-beta-D-galactoside + H2O = D-galactose 6-phosphate + an alcohol. It participates in carbohydrate metabolism; lactose degradation; D-galactose 6-phosphate and beta-D-glucose from lactose 6-phosphate: step 1/1. This Staphylococcus aureus (strain Mu3 / ATCC 700698) protein is 6-phospho-beta-galactosidase.